The sequence spans 356 residues: DNA polymerase IV (356 aa).

The 188-residue stretch at 1-188 (MDTSRKIIHI…IPVTKFYGVG (188 aa)) folds into the UmuC domain. Mg(2+) is bound by residues aspartate 11 and aspartate 106. Glutamate 107 is an active-site residue.

This sequence belongs to the DNA polymerase type-Y family. In terms of assembly, monomer. Mg(2+) serves as cofactor.

Its subcellular location is the cytoplasm. The catalysed reaction is DNA(n) + a 2'-deoxyribonucleoside 5'-triphosphate = DNA(n+1) + diphosphate. Poorly processive, error-prone DNA polymerase involved in untargeted mutagenesis. Copies undamaged DNA at stalled replication forks, which arise in vivo from mismatched or misaligned primer ends. These misaligned primers can be extended by PolIV. Exhibits no 3'-5' exonuclease (proofreading) activity. May be involved in translesional synthesis, in conjunction with the beta clamp from PolIII. The protein is DNA polymerase IV of Listeria innocua serovar 6a (strain ATCC BAA-680 / CLIP 11262).